Consider the following 123-residue polypeptide: SGSCEVKTCWWSQPDFRVVGDYLKDKYDSASEMIVEKHRESRGWVETLTPKYTSFKAPTERDLIYYDSSPNFCNPNPATGSFGTRHRKCNITSHGIDGCELLCCGRGHDTRTEKRREKCHCIF.

Ser1 carries the O-palmitoleoyl serine lipid modification. A disulfide bridge links Cys89 with Cys104. N-linked (GlcNAc...) asparagine glycosylation occurs at Asn90.

This sequence belongs to the Wnt family. Disulfide bonds have critical and distinct roles in secretion and activity. Loss of each conserved cysteine results in high molecular weight oxidized Wnt oligomers, which are formed through inter-Wnt disulfide bonding. In terms of processing, palmitoleoylation is required for efficient binding to frizzled receptors. Depalmitoleoylation leads to Wnt signaling pathway inhibition.

It is found in the secreted. It localises to the extracellular space. The protein resides in the extracellular matrix. Ligand for members of the frizzled family of seven transmembrane receptors. Functions in the canonical Wnt signaling pathway that results in activation of transcription factors of the TCF/LEF family. Required for normal embryonic mesoderm development and formation of caudal somites. Required for normal morphogenesis of the developing neural tube. In Alopias vulpinus (Common thresher shark), this protein is Protein Wnt-3a (WNT-3A).